The following is a 150-amino-acid chain: Interferon antagonist OPG027 (150 aa).

This sequence belongs to the orthopoxvirus OPG027 family.

Functionally, inhibits antiviral activity induced by type I interferons. Does not block signal transduction of IFN, but is important to counteract the host antiviral state induced by a pre-treatment with IFN. This Cynomys gunnisoni (Gunnison's prairie dog) protein is Interferon antagonist OPG027 (OPG027).